The sequence spans 187 residues: Probable nicotinate-nucleotide adenylyltransferase (187 aa).

The protein belongs to the NadD family.

The enzyme catalyses nicotinate beta-D-ribonucleotide + ATP + H(+) = deamido-NAD(+) + diphosphate. It participates in cofactor biosynthesis; NAD(+) biosynthesis; deamido-NAD(+) from nicotinate D-ribonucleotide: step 1/1. Catalyzes the reversible adenylation of nicotinate mononucleotide (NaMN) to nicotinic acid adenine dinucleotide (NaAD). This chain is Probable nicotinate-nucleotide adenylyltransferase, found in Anaeromyxobacter sp. (strain K).